The primary structure comprises 545 residues: CTP synthase (545 aa).

Positions 1 to 266 (MTTNYIFVTG…DDYICKRFSL (266 aa)) are amidoligase domain. Residue S14 coordinates CTP. S14 contributes to the UTP binding site. Residues 15-20 (SLGKGI) and D72 contribute to the ATP site. Mg(2+) is bound by residues D72 and E140. Residues 147–149 (DIE), 187–192 (KTKPTQ), and K223 each bind CTP. UTP-binding positions include 187–192 (KTKPTQ) and K223. 239-241 (KDV) contributes to the ATP binding site. The Glutamine amidotransferase type-1 domain occupies 291 to 542 (TIGMIGKYVE…VKAAGDYQKR (252 aa)). G352 serves as a coordination point for L-glutamine. Catalysis depends on C379, which acts as the Nucleophile; for glutamine hydrolysis. L-glutamine-binding positions include 380–383 (LGMQ), E403, and R470. Active-site residues include H515 and E517.

Belongs to the CTP synthase family. As to quaternary structure, homotetramer.

It catalyses the reaction UTP + L-glutamine + ATP + H2O = CTP + L-glutamate + ADP + phosphate + 2 H(+). The enzyme catalyses L-glutamine + H2O = L-glutamate + NH4(+). It carries out the reaction UTP + NH4(+) + ATP = CTP + ADP + phosphate + 2 H(+). It functions in the pathway pyrimidine metabolism; CTP biosynthesis via de novo pathway; CTP from UDP: step 2/2. Its activity is regulated as follows. Allosterically activated by GTP, when glutamine is the substrate; GTP has no effect on the reaction when ammonia is the substrate. The allosteric effector GTP functions by stabilizing the protein conformation that binds the tetrahedral intermediate(s) formed during glutamine hydrolysis. Inhibited by the product CTP, via allosteric rather than competitive inhibition. Its function is as follows. Catalyzes the ATP-dependent amination of UTP to CTP with either L-glutamine or ammonia as the source of nitrogen. Regulates intracellular CTP levels through interactions with the four ribonucleotide triphosphates. The chain is CTP synthase from Yersinia pseudotuberculosis serotype O:1b (strain IP 31758).